The following is a 602-amino-acid chain: ATP-dependent zinc metalloprotease FtsH 3 (602 aa).

Topologically, residues 1 to 18 are cytoplasmic; sequence MNSWFLQVSKRLGPAGRR. A helical membrane pass occupies residues 19–39; that stretch reads LWLLGFMGVVLAVTLGLALRA. The Periplasmic segment spans residues 40 to 117; the sequence is ARESATQRTA…DFASREDPSR (78 aa). The chain crosses the membrane as a helical span at residues 118-138; sequence AASAVLPVVVLAAVGFALFTV. Residues 139-602 are Cytoplasmic-facing; sequence SRRRSPKVFS…RRPRPEDQAA (464 aa). 202-209 is a binding site for ATP; the sequence is GEPGTGKT. His-425 provides a ligand contact to Zn(2+). The active site involves Glu-426. Zn(2+)-binding residues include His-429 and Asp-501.

In the central section; belongs to the AAA ATPase family. This sequence in the C-terminal section; belongs to the peptidase M41 family. Homohexamer. Zn(2+) serves as cofactor.

It localises to the cell inner membrane. Functionally, acts as a processive, ATP-dependent zinc metallopeptidase for both cytoplasmic and membrane proteins. Plays a role in the quality control of integral membrane proteins. This chain is ATP-dependent zinc metalloprotease FtsH 3, found in Sorangium cellulosum (strain So ce56) (Polyangium cellulosum (strain So ce56)).